The primary structure comprises 39 residues: Cytochrome b559 subunit beta (39 aa).

Residues 14-30 form a helical membrane-spanning segment; sequence WLAVHGLAIPTVFFLGS. Histidine 18 serves as a coordination point for heme.

This sequence belongs to the PsbE/PsbF family. In terms of assembly, heterodimer of an alpha subunit and a beta subunit. PSII is composed of 1 copy each of membrane proteins PsbA, PsbB, PsbC, PsbD, PsbE, PsbF, PsbH, PsbI, PsbJ, PsbK, PsbL, PsbM, PsbT, PsbX, PsbY, PsbZ, Psb30/Ycf12, at least 3 peripheral proteins of the oxygen-evolving complex and a large number of cofactors. It forms dimeric complexes. Requires heme b as cofactor.

The protein localises to the plastid membrane. Its function is as follows. This b-type cytochrome is tightly associated with the reaction center of photosystem II (PSII). PSII is a light-driven water:plastoquinone oxidoreductase that uses light energy to abstract electrons from H(2)O, generating O(2) and a proton gradient subsequently used for ATP formation. It consists of a core antenna complex that captures photons, and an electron transfer chain that converts photonic excitation into a charge separation. The protein is Cytochrome b559 subunit beta of Cuscuta gronovii (Common dodder).